Here is a 307-residue protein sequence, read N- to C-terminus: UDP-N-acetylenolpyruvoylglucosamine reductase (307 aa).

In terms of domain architecture, FAD-binding PCMH-type spans Thr-33–Gly-197. Residue Arg-176 is part of the active site. Ser-226 serves as the catalytic Proton donor. Glu-296 is an active-site residue.

The protein belongs to the MurB family. The cofactor is FAD.

Its subcellular location is the cytoplasm. It carries out the reaction UDP-N-acetyl-alpha-D-muramate + NADP(+) = UDP-N-acetyl-3-O-(1-carboxyvinyl)-alpha-D-glucosamine + NADPH + H(+). It functions in the pathway cell wall biogenesis; peptidoglycan biosynthesis. In terms of biological role, cell wall formation. In Staphylococcus aureus (strain MRSA252), this protein is UDP-N-acetylenolpyruvoylglucosamine reductase.